A 446-amino-acid polypeptide reads, in one-letter code: Adenylosuccinate synthetase (446 aa).

Residues 21-27 (GDEGKGK) and 49-51 (GHT) contribute to the GTP site. Catalysis depends on D22, which acts as the Proton acceptor. The Mg(2+) site is built by D22 and G49. IMP is bound by residues 22-25 (DEGK), 47-50 (NAGH), T141, R155, Q236, T251, and R319. Catalysis depends on H50, which acts as the Proton donor. Substrate is bound at residue 315 to 321 (VTTGRSR). GTP-binding positions include R321, 347–349 (KLD), and 429–431 (STS).

This sequence belongs to the adenylosuccinate synthetase family. As to quaternary structure, homodimer. Mg(2+) is required as a cofactor.

It localises to the cytoplasm. The enzyme catalyses IMP + L-aspartate + GTP = N(6)-(1,2-dicarboxyethyl)-AMP + GDP + phosphate + 2 H(+). It functions in the pathway purine metabolism; AMP biosynthesis via de novo pathway; AMP from IMP: step 1/2. Functionally, plays an important role in the de novo pathway of purine nucleotide biosynthesis. Catalyzes the first committed step in the biosynthesis of AMP from IMP. The polypeptide is Adenylosuccinate synthetase (Polaromonas sp. (strain JS666 / ATCC BAA-500)).